We begin with the raw amino-acid sequence, 245 residues long: 1-(5-phosphoribosyl)-5-[(5-phosphoribosylamino)methylideneamino] imidazole-4-carboxamide isomerase (245 aa).

The Proton acceptor role is filled by Asp8. Catalysis depends on Asp129, which acts as the Proton donor.

Belongs to the HisA/HisF family.

The protein resides in the cytoplasm. It carries out the reaction 1-(5-phospho-beta-D-ribosyl)-5-[(5-phospho-beta-D-ribosylamino)methylideneamino]imidazole-4-carboxamide = 5-[(5-phospho-1-deoxy-D-ribulos-1-ylimino)methylamino]-1-(5-phospho-beta-D-ribosyl)imidazole-4-carboxamide. Its pathway is amino-acid biosynthesis; L-histidine biosynthesis; L-histidine from 5-phospho-alpha-D-ribose 1-diphosphate: step 4/9. The polypeptide is 1-(5-phosphoribosyl)-5-[(5-phosphoribosylamino)methylideneamino] imidazole-4-carboxamide isomerase (Rhodopseudomonas palustris (strain BisA53)).